The sequence spans 313 residues: tRNA dimethylallyltransferase (313 aa).

An ATP-binding site is contributed by 11 to 18 (GPTACGKT). Residue 13–18 (TACGKT) participates in substrate binding. Interaction with substrate tRNA stretches follow at residues 36–39 (DSAL), 160–164 (QRIER), and 243–248 (RCVGYR).

Belongs to the IPP transferase family. As to quaternary structure, monomer. It depends on Mg(2+) as a cofactor.

The catalysed reaction is adenosine(37) in tRNA + dimethylallyl diphosphate = N(6)-dimethylallyladenosine(37) in tRNA + diphosphate. Its function is as follows. Catalyzes the transfer of a dimethylallyl group onto the adenine at position 37 in tRNAs that read codons beginning with uridine, leading to the formation of N6-(dimethylallyl)adenosine (i(6)A). The polypeptide is tRNA dimethylallyltransferase (Neisseria meningitidis serogroup C (strain 053442)).